A 216-amino-acid polypeptide reads, in one-letter code: Elongation factor 1-beta (216 aa).

This sequence belongs to the EF-1-beta/EF-1-delta family. As to quaternary structure, EF-1 is composed of 4 subunits: alpha, beta, delta, and gamma. Interacts with actin.

The protein resides in the cytoplasm. EF-1-beta and EF-1-delta stimulate the exchange of GDP bound to EF-1-alpha to GTP. The protein is Elongation factor 1-beta (efa1B) of Dictyostelium discoideum (Social amoeba).